The following is a 390-amino-acid chain: Chorismate synthase (390 aa).

2 residues coordinate NADP(+): Arg48 and Arg54. FMN-binding positions include 125 to 127, 238 to 239, Gly278, 293 to 297, and Arg319; these read RSS, NA, and KPTSS. The segment at 360-390 is disordered; that stretch reads KVPGNIINPTNPVTTQPDVRRAEDPEPDENS. A compositionally biased stretch (polar residues) spans 366 to 376; the sequence is INPTNPVTTQP.

Belongs to the chorismate synthase family. In terms of assembly, homotetramer. It depends on FMNH2 as a cofactor.

It carries out the reaction 5-O-(1-carboxyvinyl)-3-phosphoshikimate = chorismate + phosphate. The protein operates within metabolic intermediate biosynthesis; chorismate biosynthesis; chorismate from D-erythrose 4-phosphate and phosphoenolpyruvate: step 7/7. In terms of biological role, catalyzes the anti-1,4-elimination of the C-3 phosphate and the C-6 proR hydrogen from 5-enolpyruvylshikimate-3-phosphate (EPSP) to yield chorismate, which is the branch point compound that serves as the starting substrate for the three terminal pathways of aromatic amino acid biosynthesis. This reaction introduces a second double bond into the aromatic ring system. This is Chorismate synthase from Nitrosomonas eutropha (strain DSM 101675 / C91 / Nm57).